A 525-amino-acid chain; its full sequence is DNA damage-binding protein CMR1 (525 aa).

2 disordered regions span residues 38-86 and 212-233; these read AGIF…AESE and GILDASQQPDQNESDEEDEYPD. Residues 53-62 are compositionally biased toward basic residues; the sequence is TKKKPAPKRV. WD repeat units follow at residues 183-224, 241-281, 288-328, 339-379, 384-425, 448-491, and 494-525; these read ITRE…DQNE, PHTN…ATEA, SDDE…KANP, LSEK…TKHP, EHES…KDWK, GKWV…LAQL, and DVITAVPAVAVFHRTQNWVVGGTGSAKVCLWM. The span at 223–232 shows a compositional bias: acidic residues; that stretch reads NESDEEDEYP.

Belongs to the WD repeat DDB2/WDR76 family.

Functionally, DNA-binding protein that binds to both single- and double-stranded DNA. Binds preferentially to UV-damaged DNA. May be involved in DNA-metabolic processes. This chain is DNA damage-binding protein CMR1, found in Coccidioides immitis (strain RS) (Valley fever fungus).